A 385-amino-acid chain; its full sequence is Pectate lyase E (385 aa).

The signal sequence occupies residues 1–30 (MKNTRVRSIGTKSLLAAVVTAALMATSAYA). Aspartate 164 provides a ligand contact to Ca(2+). Residues 177 to 182 (DHVTIS) form repeat 1. The 2 X 6 AA approximate repeats stretch occupies residues 177–218 (DHVTISDGSFTDDKYTTKDGEKYVQHDGALDIKKGSDYVTIS). Aspartate 207 is a Ca(2+) binding site. Copy 2 of the repeat occupies 213 to 218 (DYVTIS). Arginine 260 is a catalytic residue.

It belongs to the polysaccharide lyase 1 family. PLBC subfamily. It depends on Ca(2+) as a cofactor.

Its subcellular location is the secreted. It catalyses the reaction Eliminative cleavage of (1-&gt;4)-alpha-D-galacturonan to give oligosaccharides with 4-deoxy-alpha-D-galact-4-enuronosyl groups at their non-reducing ends.. Its pathway is glycan metabolism; pectin degradation; 2-dehydro-3-deoxy-D-gluconate from pectin: step 2/5. Its function is as follows. Involved in maceration and soft-rotting of plant tissue. The chain is Pectate lyase E (pelE) from Dickeya chrysanthemi (Pectobacterium chrysanthemi).